Here is a 344-residue protein sequence, read N- to C-terminus: Cycloartenol-C-24-methyltransferase 1 (344 aa).

This sequence belongs to the class I-like SAM-binding methyltransferase superfamily. Erg6/SMT family.

The catalysed reaction is zymosterol + S-adenosyl-L-methionine = fecosterol + S-adenosyl-L-homocysteine + H(+). It participates in steroid biosynthesis; sterol biosynthesis. Its function is as follows. Catalyzes the methyl transfer from S-adenosyl-methionine to the C-24 of cycloartenol to form 24-methylene cycloartenol. The chain is Cycloartenol-C-24-methyltransferase 1 (Smt1-1) from Oryza sativa subsp. japonica (Rice).